Consider the following 350-residue polypeptide: MRYSTVLAALALLGTSAVSVLAALPDQIDVKVKNLTPEDTIYDRTRQVFYQSNLYKGRIEVYNPKTQSHFNVVIDGASSNGDGEQQMSGLSLLTHDNSKRLFAVMKNAKSFNFADQSSHGASSFHSFNLPLSENSKPVWSVNFEKVQDEFEKKAGKRPFGVVQSAQDRDGNSYVAFALGMPAIARVSADGKTVSTFAWESGNGGQRPGYSGITFDPHSNKLIAFGGPRALTAFDVSKPYAWPEPVKINGDFGTLSGTEKIVTVPVGNESVLVGARAPYAISFRSWDNWKSANIKKTKRSELQNSGFTAVADYYQGSEQGLYAVSAFFDNGAHGGRSDYPLYKLDNSILNF.

Positions 1 to 22 (MRYSTVLAALALLGTSAVSVLA) are cleaved as a signal peptide.

The protein resides in the secreted. It is found in the cell wall. The sequence is that of Major allergen Mal f 1 from Malassezia furfur (Pityriasis versicolor infection agent).